A 219-amino-acid polypeptide reads, in one-letter code: Probable nicotinate-nucleotide adenylyltransferase (219 aa).

This sequence belongs to the NadD family.

It carries out the reaction nicotinate beta-D-ribonucleotide + ATP + H(+) = deamido-NAD(+) + diphosphate. It functions in the pathway cofactor biosynthesis; NAD(+) biosynthesis; deamido-NAD(+) from nicotinate D-ribonucleotide: step 1/1. Its function is as follows. Catalyzes the reversible adenylation of nicotinate mononucleotide (NaMN) to nicotinic acid adenine dinucleotide (NaAD). The polypeptide is Probable nicotinate-nucleotide adenylyltransferase (Pseudoalteromonas atlantica (strain T6c / ATCC BAA-1087)).